Reading from the N-terminus, the 339-residue chain is Glyceraldehyde-3-phosphate dehydrogenase (339 aa).

NAD(+)-binding positions include 12 to 13, aspartate 34, arginine 78, and threonine 120; that span reads RI. D-glyceraldehyde 3-phosphate-binding positions include 149-151, threonine 180, 209-210, and arginine 232; these read SCT and TG. Cysteine 150 functions as the Nucleophile in the catalytic mechanism. Asparagine 319 contacts NAD(+).

This sequence belongs to the glyceraldehyde-3-phosphate dehydrogenase family. In terms of assembly, homotetramer.

It localises to the cytoplasm. It catalyses the reaction D-glyceraldehyde 3-phosphate + phosphate + NAD(+) = (2R)-3-phospho-glyceroyl phosphate + NADH + H(+). It participates in carbohydrate degradation; glycolysis; pyruvate from D-glyceraldehyde 3-phosphate: step 1/5. Catalyzes the oxidative phosphorylation of glyceraldehyde 3-phosphate (G3P) to 1,3-bisphosphoglycerate (BPG) using the cofactor NAD. The first reaction step involves the formation of a hemiacetal intermediate between G3P and a cysteine residue, and this hemiacetal intermediate is then oxidized to a thioester, with concomitant reduction of NAD to NADH. The reduced NADH is then exchanged with the second NAD, and the thioester is attacked by a nucleophilic inorganic phosphate to produce BPG. This chain is Glyceraldehyde-3-phosphate dehydrogenase (gapA), found in Haemophilus influenzae (strain ATCC 51907 / DSM 11121 / KW20 / Rd).